Consider the following 199-residue polypeptide: MAFKLPNLPYAYDALEPYIDQRTMEFHHDKHHNTYVTKLNATVEGTELEHQSLADMIANLDKVPEAMRMSVRNNGGGHFNHSLFWEILSPNSEEKGGVIDDIKAQWGTLDEFKNEFANKATTLFGSGWTWLVVNDGKLEIVTTPNQDNPLTEGKTPILLFDVWEHAYYLKYQNKRPDYMTAFWNIVNWKKVDELYQAAK.

H27, H81, D161, and H165 together coordinate Fe(3+). Residues H27, H81, D161, and H165 each contribute to the Mn(2+) site.

Belongs to the iron/manganese superoxide dismutase family. Homodimer. Can also form a heterodimer with SodA. Mn(2+) is required as a cofactor. Requires Fe(3+) as cofactor.

It carries out the reaction 2 superoxide + 2 H(+) = H2O2 + O2. Functionally, destroys superoxide anion radicals which are normally produced within the cells and which are toxic to biological systems. Catalyzes the dismutation of superoxide anion radicals into O2 and H2O2 by successive reduction and oxidation of the transition metal ion at the active site. In Staphylococcus aureus (strain USA300), this protein is Superoxide dismutase [Mn/Fe] 2 (sodM).